Reading from the N-terminus, the 167-residue chain is MSSHVISLTVNGQAIERKVDSRTLLADFLRDELRLTGTHVGCEHGVCGACTIQFDGEPARSCLMLAVQAEGHSIRTVEALAVDGCLGALQQAFHEKHGLQCGFCTPGLLMTLDYALTADLHIDFSSDKEIRELISGNLCRCTGYQNIINAIKSVSPTTEIAKSEELV.

In terms of domain architecture, 2Fe-2S ferredoxin-type spans 4–80 (HVISLTVNGQ…GHSIRTVEAL (77 aa)). [2Fe-2S] cluster-binding residues include cysteine 42, cysteine 47, cysteine 50, and cysteine 62.

In terms of assembly, heterotrimer composed of an alpha (CdhA), a beta (CdhB) and a gamma (CdhC) subunit.

It catalyses the reaction caffeine + a ubiquinone + H2O = 1,3,7-trimethylurate + a ubiquinol. The catalysed reaction is ubiquinone-0 + caffeine + H2O = ubiquinol-0 + 1,3,7-trimethylurate. The enzyme catalyses theobromine + a ubiquinone + H2O = 3,7-dimethylurate + a ubiquinol. In terms of biological role, component of the caffeine dehydrogenase complex that catalyzes the hydrolytical oxidation of 1,3,7-trimethylxanthine (caffeine) by incorporation of an oxygen atom originating from a water molecule into position C-8 to produce 1,3,7-trimethyluric acid (TMU). Coenzyme Q0 (ubiquinone-0) is the preferred electron acceptor and, to a lesser extent, coenzyme Q2 (ubiquinone-2) can also be used, but oxygen and NAD(P)(+) cannot. Is involved in a caffeine degradation pathway that allows Pseudomonas sp. strain CBB1 to grow on caffeine as the sole carbon and nitrogen source. Is also active with theobromine as substrate, but shows a very poor activity with theophylline and is not active with xanthine, 3-methylxanthine, 7-methylxanthine, TMU, and 3,7-dimethylurate. This Pseudomonas sp. (strain CBB1) protein is Caffeine dehydrogenase subunit gamma.